A 164-amino-acid polypeptide reads, in one-letter code: MTEFTHINQQGHAKMVDVSDKQITKRTAVAHSSITVNKTIFKQISNNTNTKGNVLNTAQIAGIMAAKNTSTIIPMCHPLPLTGIDVHFSWDETNAPLYTLNIQTTVSTTGKTGVEMEALTAASATALTIYDMTKAVDKGMIIGETYLESKSGGKSGDFQRQSNQ.

Substrate is bound by residues 75 to 77 and 116 to 117; these read MCH and ME. Residue D131 is part of the active site.

The protein belongs to the MoaC family. Homohexamer; trimer of dimers.

The catalysed reaction is (8S)-3',8-cyclo-7,8-dihydroguanosine 5'-triphosphate = cyclic pyranopterin phosphate + diphosphate. It functions in the pathway cofactor biosynthesis; molybdopterin biosynthesis. In terms of biological role, catalyzes the conversion of (8S)-3',8-cyclo-7,8-dihydroguanosine 5'-triphosphate to cyclic pyranopterin monophosphate (cPMP). This Staphylococcus aureus (strain MSSA476) protein is Cyclic pyranopterin monophosphate synthase.